The chain runs to 494 residues: MTNWQQQLPLTDTQKNELDKSVLRYLNWNYKQTVRHEHAQDYESVRHAIVTLSGFLLQESVDRQEFISNNDTSNESMVDIDELLLPKKWNSIVRLQKKIIELEQNTETLVSQIKDLNTQVSELAQFKPTTSNGTSAHNVLKWIPRNLPSCLINVESSVTSVKLHPNLPIVFVATDHGKLYAFDLFNYTIPLASLQSHTKAITSMDVLFTNFTNSSKKNYLVVVTASKDLQIHVFKWVSEECKFQQIRSLLGHEHIVSAVKIWQKNNDVHIASCSRDQTVKIWDFHNGWSLKTFQPHSQWVRSIDVLGDYIISGSHDTTLRLTHWPSGNGLSVGTGHEFPIEKVKFIHFIEDSPEIRFRTPSTDRYKNWGMQYCVSASRDRTIKIWEIPLPTLMAHRAPIPNPTDSNFRCVLTLKGHLSWVRDISIRGQYLFSCADDKSVRCWDLNTGQCLHVWEKLHTGFVNSLDLDVDFDSNVTPRQMMVTGGLDCKSNVFMR.

In terms of domain architecture, LisH spans Gln-14–Arg-46. The stretch at Asn-90 to Leu-123 forms a coiled coil. 7 WD repeats span residues Asn-153–Ala-192, Ser-196–Gln-244, Gly-251–Thr-292, Pro-295–Thr-334, His-347–His-395, Gly-415–Glu-454, and His-457–Phe-492.

Belongs to the WD repeat LIS1/nudF family. Self-associates. Interacts with NDL1 and dynein.

It is found in the cytoplasm. Its subcellular location is the cytoskeleton. The protein resides in the spindle pole. Functionally, positively regulates the activity of the minus-end directed microtubule motor protein dynein. Plays a central role in positioning the mitotic spindle at the bud neck during cell division. Targets cytoplasmic dynein to microtubule plus ends, thereby promoting dynein-mediated microtubule sliding along the bud cortex and consequently the movement of the mitotic spindle to the bud neck. This Saccharomyces cerevisiae (strain JAY291) (Baker's yeast) protein is Nuclear distribution protein PAC1.